We begin with the raw amino-acid sequence, 803 residues long: Translation initiation factor IF-2 (803 aa).

2 disordered regions span residues 95–125 and 138–209; these read PVVEQKRETEPAPTQEVPLTSDTTNLNEKAE and EVKE…KLEQ. A compositionally biased stretch (polar residues) spans 111 to 121; it reads VPLTSDTTNLN. The segment covering 138-155 has biased composition (basic and acidic residues); the sequence is EVKEEAKKTPSEKKETPK. Over residues 156–167 the composition is skewed to basic residues; sequence KGPRKETRRSRK. The segment covering 168-188 has biased composition (basic and acidic residues); the sequence is PDKEDKWEREELHMTKLVEER. In terms of domain architecture, tr-type G spans 302-471; that stretch reads PRAPVVTIMG…LLQAEVLELK (170 aa). The interval 311 to 318 is G1; it reads GHVDHGKT. 311 to 318 contacts GTP; sequence GHVDHGKT. Residues 336-340 form a G2 region; the sequence is GITQH. Residues 357–360 form a G3 region; the sequence is DTPG. Residues 357–361 and 411–414 each bind GTP; these read DTPGH and NKID. The tract at residues 411 to 414 is G4; the sequence is NKID. The interval 447-449 is G5; that stretch reads SAK.

Belongs to the TRAFAC class translation factor GTPase superfamily. Classic translation factor GTPase family. IF-2 subfamily.

Its subcellular location is the cytoplasm. Its function is as follows. One of the essential components for the initiation of protein synthesis. Protects formylmethionyl-tRNA from spontaneous hydrolysis and promotes its binding to the 30S ribosomal subunits. Also involved in the hydrolysis of GTP during the formation of the 70S ribosomal complex. In Coxiella burnetii (strain CbuG_Q212) (Coxiella burnetii (strain Q212)), this protein is Translation initiation factor IF-2.